An 86-amino-acid polypeptide reads, in one-letter code: Large ribosomal subunit protein bL27 (86 aa).

The disordered stretch occupies residues 1–24 (MATKKAGGSSRNGRDSAGRRLGVK).

The protein belongs to the bacterial ribosomal protein bL27 family.

The protein is Large ribosomal subunit protein bL27 of Rickettsia felis (strain ATCC VR-1525 / URRWXCal2) (Rickettsia azadi).